The following is a 544-amino-acid chain: Probable protein kinase UbiB (544 aa).

In terms of domain architecture, Protein kinase spans 123–501 (DFDLVPLASA…KRQQATGKFL (379 aa)). Residues 129–137 (LASASIAQV) and lysine 152 contribute to the ATP site. The active-site Proton acceptor is aspartate 287. 2 helical membrane-spanning segments follow: residues 496–516 (ATGK…AILV) and 519–539 (TYEQ…LFSW).

This sequence belongs to the ABC1 family. UbiB subfamily.

It localises to the cell inner membrane. The protein operates within cofactor biosynthesis; ubiquinone biosynthesis [regulation]. Is probably a protein kinase regulator of UbiI activity which is involved in aerobic coenzyme Q (ubiquinone) biosynthesis. This chain is Probable protein kinase UbiB, found in Vibrio vulnificus (strain YJ016).